The sequence spans 327 residues: MEIKLIVLSLALLLDRFIGDPPLLWQRISHPVVLLGKAISWGEKNFNDSSLPPSTLRRNGMWLTVGLVAACIFAGLVIRSILPHAGTAGAIVEVVIVAILLAQKSLADHVQAVAQALRDDGIEGGRKAVSMIVGRNPDRLDEGGVSRAAIESLAENASDGIVAPAFWFLVGGLPGLFAYKLINTADSMIGHLNDRYRDFGRFAAKLDDVANYIPARLTGLLAALATSLGHGREAGRQALSIMCRDARLHRSPNAGWPEAAFAGALGLALAGPRQYGAETVEGPMLNATGKREAEARDIDAALVLFWSTMSLMTGLVIAASLVGLFVG.

A run of 4 helical transmembrane segments spans residues 61–78 (MWLT…GLVI), 80–102 (SILP…ILLA), 160–182 (GIVA…YKLI), and 300–322 (AALV…ASLV).

The protein belongs to the CobD/CbiB family.

It localises to the cell membrane. The protein operates within cofactor biosynthesis; adenosylcobalamin biosynthesis. In terms of biological role, converts cobyric acid to cobinamide by the addition of aminopropanol on the F carboxylic group. This chain is Cobalamin biosynthesis protein CobD, found in Brucella suis biovar 1 (strain 1330).